A 65-amino-acid chain; its full sequence is Large ribosomal subunit protein bL35 (65 aa).

Positions 1–65 are disordered; that stretch reads MPKMKTNRAA…GRLDRMLPYL (65 aa). A compositionally biased stretch (basic residues) spans 10 to 44; that stretch reads AAKRFRKTASGKYKAGHANRSHILTKKATKRKRNL. Residues 50 to 65 are compositionally biased toward basic and acidic residues; the sequence is VRAEDAGRLDRMLPYL.

Belongs to the bacterial ribosomal protein bL35 family.

This Xylella fastidiosa (strain M12) protein is Large ribosomal subunit protein bL35.